An 87-amino-acid polypeptide reads, in one-letter code: Glutaredoxin (87 aa).

The 87-residue stretch at 1–87 (MFVVIFGRPG…YAKENLGLFD (87 aa)) folds into the Glutaredoxin domain. The cysteines at positions 11 and 14 are disulfide-linked.

Belongs to the glutaredoxin family. In terms of assembly, monomer.

It localises to the cytoplasm. Has a glutathione-disulfide oxidoreductase activity in the presence of NADPH and glutathione reductase. Reduces low molecular weight disulfides and proteins. The polypeptide is Glutaredoxin (grx) (Vibrio cholerae serotype O1 (strain ATCC 39315 / El Tor Inaba N16961)).